An 846-amino-acid chain; its full sequence is Translation initiation factor IF-2 (846 aa).

Residues 94–263 form a disordered region; it reads QRSPEEIQAE…HGFQNPTGPV (170 aa). Basic and acidic residues predominate over residues 96–135; sequence SPEEIQAEQKRELEERRAAENAARDKVEAEVRQRNEEQAR. Composition is skewed to low complexity over residues 136 to 148 and 158 to 176; these read RQAA…APAP and AAPV…ASED. Composition is skewed to basic and acidic residues over residues 177 to 206 and 230 to 239; these read AAAR…RGEA and TTDEESDGAR. A compositionally biased stretch (basic residues) spans 240-253; sequence RGRGGKSKLKKRNQ. The tr-type G domain occupies 346–513; the sequence is SRAPVVTVMG…AVLLQAEILE (168 aa). The tract at residues 355–362 is G1; it reads GHVDHGKT. Residue 355–362 participates in GTP binding; the sequence is GHVDHGKT. Positions 380-384 are G2; the sequence is GITQH. Residues 401 to 404 are G3; the sequence is DTPG. Residues 401-405 and 455-458 each bind GTP; these read DTPGH and NKID. The G4 stretch occupies residues 455-458; the sequence is NKID. The G5 stretch occupies residues 491–493; sequence SAK.

Belongs to the TRAFAC class translation factor GTPase superfamily. Classic translation factor GTPase family. IF-2 subfamily.

The protein localises to the cytoplasm. In terms of biological role, one of the essential components for the initiation of protein synthesis. Protects formylmethionyl-tRNA from spontaneous hydrolysis and promotes its binding to the 30S ribosomal subunits. Also involved in the hydrolysis of GTP during the formation of the 70S ribosomal complex. The chain is Translation initiation factor IF-2 from Pseudomonas putida (strain ATCC 700007 / DSM 6899 / JCM 31910 / BCRC 17059 / LMG 24140 / F1).